A 504-amino-acid polypeptide reads, in one-letter code: Probable alpha-L-arabinofuranosidase C (504 aa).

3 N-linked (GlcNAc...) asparagine glycosylation sites follow: N152, N181, and N269.

Belongs to the glycosyl hydrolase 51 family.

It localises to the secreted. It catalyses the reaction Hydrolysis of terminal non-reducing alpha-L-arabinofuranoside residues in alpha-L-arabinosides.. It functions in the pathway glycan metabolism; L-arabinan degradation. Alpha-L-arabinofuranosidase involved in the degradation of arabinoxylan, a major component of plant hemicellulose. Acts only on small linear 1,5-alpha-linked L-arabinofuranosyl oligosaccharides. The protein is Probable alpha-L-arabinofuranosidase C (abfC) of Aspergillus flavus (strain ATCC 200026 / FGSC A1120 / IAM 13836 / NRRL 3357 / JCM 12722 / SRRC 167).